We begin with the raw amino-acid sequence, 339 residues long: Cilia- and flagella-associated protein 36 (339 aa).

Coiled-coil stretches lie at residues 142–188 (ISDL…ENKQ) and 255–330 (NLSQ…EVIL). 2 disordered regions span residues 177 to 212 (NLTL…EKQP) and 281 to 318 (KKQE…QRRK). A compositionally biased stretch (polar residues) spans 187 to 200 (KQSSGSERTPNNTE). Positions 281 to 313 (KKQESKKMAQNSEEHEEKATCSKQEMTEEEKKS) are enriched in basic and acidic residues.

The protein belongs to the CFAP36 family.

The protein localises to the nucleus. Its subcellular location is the cytoplasm. It localises to the cell projection. The protein resides in the cilium. It is found in the flagellum. The protein is Cilia- and flagella-associated protein 36 of Xenopus tropicalis (Western clawed frog).